The primary structure comprises 85 residues: UPF0181 protein YPO1774/y2534/YP_1619 (85 aa).

The segment at 50–85 (QAMAIFEDHDFDEHTESDYRRDDEPDADDIEDPYEG) is disordered. The span at 55–72 (FEDHDFDEHTESDYRRDD) shows a compositional bias: basic and acidic residues. The segment covering 73–85 (EPDADDIEDPYEG) has biased composition (acidic residues).

This sequence belongs to the UPF0181 family.

This Yersinia pestis protein is UPF0181 protein YPO1774/y2534/YP_1619.